The following is a 407-amino-acid chain: Wilms tumor protein homolog B (407 aa).

Residues Lys55 and Lys158 each participate in a glycyl lysine isopeptide (Lys-Gly) (interchain with G-Cter in SUMO) cross-link. The 9aaTAD motif lies at 213-221 (MTWNQMNLG). 4 consecutive C2H2-type zinc fingers follow at residues 284-308 (FMCA…SRKH), 314-338 (YQCD…QRRH), 344-366 (FQCK…TRTH), and 372-396 (FSCR…HNMH). Important for interaction with target DNA stretches follow at residues 328-342 (SDQL…TGVK) and 354-362 (SRSDHLKTH).

Belongs to the EGR C2H2-type zinc-finger protein family. In terms of tissue distribution, expressed in the pronephric anlage from stage 23 to 30. Also expressed in the adult kidney (mesonephros) and in testis.

It is found in the nucleus. Its subcellular location is the cytoplasm. It localises to the nucleus speckle. Its function is as follows. Transcription factor required for development of the vascular component of the pronephric kidney, the glomus; may repress tubule-specific gene expression in the portion of the pronephros fated to form the glomus. Recognizes and binds to the DNA sequence 5'-GCG(T/G)GGGCG-3'. Inhibits Wnt-signaling during embryonic development. This is Wilms tumor protein homolog B (wt1-b) from Xenopus laevis (African clawed frog).